The sequence spans 284 residues: Ermin (284 aa).

The tract at residues 1-61 (MTDVPATFTQ…APTKGSQEER (61 aa)) is disordered. Residue Ser-73 is modified to Phosphoserine. The segment at 108–251 (TFREGRQWEK…PTLGKKSDIS (144 aa)) is disordered. 2 stretches are compositionally biased toward basic and acidic residues: residues 126–140 (EIRR…QPLK) and 171–183 (LHSK…KVWD). Positions 184–200 (EEIDDDDDDNCNDDEDE) are enriched in acidic residues. Residues 201–220 (VRVIEFKKKHEEVSQFKEEG) show a composition bias toward basic and acidic residues. 4 positions are modified to phosphoserine: Ser-214, Ser-226, Ser-230, and Ser-233. Residues 225–235 (DSPLSSASSQA) are compositionally biased toward low complexity. Thr-237 bears the Phosphothreonine mark. Residues 265–284 (KIRKGNTKQRIDEFESMMHL) are binds actin.

As to quaternary structure, binds actin.

The protein localises to the cytoplasm. It is found in the cytoskeleton. Its function is as follows. Plays a role in cytoskeletal rearrangements during the late wrapping and/or compaction phases of myelinogenesis as well as in maintenance and stability of myelin sheath in the adult. May play an important role in late-stage oligodendroglia maturation, myelin/Ranvier node formation during CNS development, and in the maintenance and plasticity of related structures in the mature CNS. The polypeptide is Ermin (ERMN) (Pongo abelii (Sumatran orangutan)).